The primary structure comprises 299 residues: Protein LacX, chromosomal (299 aa).

In Lactococcus lactis subsp. lactis (Streptococcus lactis), this protein is Protein LacX, chromosomal (lacX).